A 500-amino-acid polypeptide reads, in one-letter code: Potassium voltage-gated channel subfamily V member 1 (500 aa).

Residues 1 to 210 (MPSSGRALLD…EKPGSSTAAR (210 aa)) are Cytoplasmic-facing. The segment covering 168 to 181 (KKDTEDQESQHESE) has biased composition (basic and acidic residues). Residues 168–189 (KKDTEDQESQHESEQDFSQGPC) are disordered. Residues 211-231 (IFGVISIIFVVVSIINMALMS) form a helical membrane-spanning segment. Topologically, residues 232–238 (AELSWLD) are extracellular. A helical membrane pass occupies residues 239-259 (LQLLEILEYVCISWFTGEFVL). The Cytoplasmic segment spans residues 260-276 (RFLCVRDRCRFLRKVPN). The helical transmembrane segment at 277-297 (IIDLLAILPFYITLLVESLSG) threads the bilayer. Residues 298–309 (SQTTQELENVGR) are Extracellular-facing. A helical; Voltage-sensor membrane pass occupies residues 310 to 331 (IVQVLRLLRALRMLKLGRHSTG). The Cytoplasmic segment spans residues 332 to 345 (LRSLGMTITQCYEE). A helical transmembrane segment spans residues 346–366 (VGLLLLFLSVGISIFSTVEYF). The Selectivity filter motif lies at 392-397 (TVGYGD). Residues 407–427 (IVAFMCILSGILVLALPIAII) form a helical membrane-spanning segment. Residues 428–500 (NDRFSACYFT…RSSGGDDFWF (73 aa)) are Cytoplasmic-facing.

Belongs to the potassium channel family. V (TC 1.A.1.2) subfamily. Kv8.1/KCNV1 sub-subfamily. As to quaternary structure, heteromultimer with KCNB1 and KCNB2. Interacts with KCNC4 and KCND1. In terms of tissue distribution, detected in brain.

The protein resides in the cell membrane. Potassium channel subunit that does not form functional channels by itself. Modulates KCNB1 and KCNB2 channel activity by shifting the threshold for inactivation to more negative values and by slowing the rate of inactivation. Can down-regulate the channel activity of KCNB1, KCNB2, KCNC4 and KCND1, possibly by trapping them in intracellular membranes. The chain is Potassium voltage-gated channel subfamily V member 1 (KCNV1) from Homo sapiens (Human).